The chain runs to 311 residues: Geranylgeranyl transferase type-2 subunit beta (311 aa).

PFTB repeat units follow at residues 54–95 (KERI…AMLD), 102–143 (KDKV…AILG), 150–191 (KNTA…KILN), 197–239 (DEEL…AIIG), and 246–288 (RNQL…SLLQ). Geranylgeranyl diphosphate-binding positions include 176-178 (HGA) and 218-230 (RPEK…YGWW). Residues Asp224, Cys226, and His276 each contribute to the Zn(2+) site.

The protein belongs to the protein prenyltransferase subunit beta family. Heterodimer of an alpha and a beta subunit. The cofactor is Zn(2+).

The enzyme catalyses geranylgeranyl diphosphate + L-cysteinyl-[protein] = S-geranylgeranyl-L-cysteinyl-[protein] + diphosphate. Functionally, catalyzes the transfer of a geranyl-geranyl moiety from geranyl-geranyl pyrophosphate to proteins having the C-terminal -XCC or -XCXC, where both cysteines may become modified. The chain is Geranylgeranyl transferase type-2 subunit beta (ptb1) from Schizosaccharomyces pombe (strain 972 / ATCC 24843) (Fission yeast).